The following is a 120-amino-acid chain: NAD(P)H-quinone oxidoreductase subunit 3 (120 aa).

3 helical membrane passes run 10–30 (LLVF…ASAL), 64–84 (MFAL…PWAV), and 89–109 (LGLL…VGLV).

It belongs to the complex I subunit 3 family. As to quaternary structure, NDH-1 can be composed of about 15 different subunits; different subcomplexes with different compositions have been identified which probably have different functions.

The protein resides in the cellular thylakoid membrane. The catalysed reaction is a plastoquinone + NADH + (n+1) H(+)(in) = a plastoquinol + NAD(+) + n H(+)(out). It carries out the reaction a plastoquinone + NADPH + (n+1) H(+)(in) = a plastoquinol + NADP(+) + n H(+)(out). NDH-1 shuttles electrons from an unknown electron donor, via FMN and iron-sulfur (Fe-S) centers, to quinones in the respiratory and/or the photosynthetic chain. The immediate electron acceptor for the enzyme in this species is believed to be plastoquinone. Couples the redox reaction to proton translocation, and thus conserves the redox energy in a proton gradient. Cyanobacterial NDH-1 also plays a role in inorganic carbon-concentration. This Synechococcus sp. (strain JA-3-3Ab) (Cyanobacteria bacterium Yellowstone A-Prime) protein is NAD(P)H-quinone oxidoreductase subunit 3.